The following is a 129-amino-acid chain: Small ribosomal subunit protein uS11 (129 aa).

It belongs to the universal ribosomal protein uS11 family. In terms of assembly, part of the 30S ribosomal subunit. Interacts with proteins S7 and S18. Binds to IF-3.

In terms of biological role, located on the platform of the 30S subunit, it bridges several disparate RNA helices of the 16S rRNA. Forms part of the Shine-Dalgarno cleft in the 70S ribosome. The sequence is that of Small ribosomal subunit protein uS11 from Aliivibrio fischeri (strain ATCC 700601 / ES114) (Vibrio fischeri).